A 391-amino-acid polypeptide reads, in one-letter code: Na(+)/H(+) antiporter NhaA (391 aa).

The next 11 membrane-spanning stretches (helical) occupy residues 14 to 34, 47 to 67, 87 to 107, 117 to 137, 146 to 166, 171 to 191, 205 to 225, 252 to 272, 280 to 300, 318 to 338, and 356 to 376; these read AGGILLVIAAAIAMTIANSPL, FGMSVSHWINDGLMAVFFLLI, IFPAIAAVGGMLAPALIYVAF, GWAIPAATDIAFALGIMALLG, VFLLALAIIDDLGVVVIIALF, LSTMALLVGFAMTGVLFMLNA, AILWFAVLKSGVHATLAGVVI, VAFGILPLFAFANAGISLEGV, MLPLGIALGLLVGKPLGIFTF, FIHIFAVSVLCGIGFTMSIFI, and LGILMGSTTAAIIGYVLLHFS.

It belongs to the NhaA Na(+)/H(+) (TC 2.A.33) antiporter family.

Its subcellular location is the cell inner membrane. The enzyme catalyses Na(+)(in) + 2 H(+)(out) = Na(+)(out) + 2 H(+)(in). Na(+)/H(+) antiporter that extrudes sodium in exchange for external protons. This Vibrio campbellii (strain ATCC BAA-1116) protein is Na(+)/H(+) antiporter NhaA.